Here is a 585-residue protein sequence, read N- to C-terminus: Arginine--tRNA ligase (585 aa).

A 'HIGH' region motif is present at residues 127–137; it reads PNTNKPLHVGH.

Belongs to the class-I aminoacyl-tRNA synthetase family. As to quaternary structure, monomer.

The protein localises to the cytoplasm. It catalyses the reaction tRNA(Arg) + L-arginine + ATP = L-arginyl-tRNA(Arg) + AMP + diphosphate. In Borrelia duttonii (strain Ly), this protein is Arginine--tRNA ligase.